A 261-amino-acid chain; its full sequence is DNA repair protein RecO (261 aa).

It belongs to the RecO family.

Its function is as follows. Involved in DNA repair and RecF pathway recombination. The sequence is that of DNA repair protein RecO from Chlorobium phaeobacteroides (strain DSM 266 / SMG 266 / 2430).